Consider the following 290-residue polypeptide: 33 kDa chaperonin (290 aa).

2 cysteine pairs are disulfide-bonded: Cys-235–Cys-237 and Cys-268–Cys-271.

Belongs to the HSP33 family. Post-translationally, under oxidizing conditions two disulfide bonds are formed involving the reactive cysteines. Under reducing conditions zinc is bound to the reactive cysteines and the protein is inactive.

Its subcellular location is the cytoplasm. In terms of biological role, redox regulated molecular chaperone. Protects both thermally unfolding and oxidatively damaged proteins from irreversible aggregation. Plays an important role in the bacterial defense system toward oxidative stress. The chain is 33 kDa chaperonin from Streptococcus equi subsp. zooepidemicus (strain MGCS10565).